A 401-amino-acid chain; its full sequence is Nuclear rim protein 1 (401 aa).

2 consecutive transmembrane segments (helical) span residues 146 to 166 and 256 to 274; these read LLLF…WTFI and FLTS…FLIL.

This sequence belongs to the NUR1 family.

The protein localises to the nucleus membrane. Its function is as follows. Member of a perinuclear network that controls recombination at multiple loci to maintain genome stability. Required for rDNA repeat stability. This is Nuclear rim protein 1 (NUR1) from Vanderwaltozyma polyspora (strain ATCC 22028 / DSM 70294 / BCRC 21397 / CBS 2163 / NBRC 10782 / NRRL Y-8283 / UCD 57-17) (Kluyveromyces polysporus).